The chain runs to 37 residues: Serrulin (37 aa).

The segment at 16-37 (FGGGGIGGGGFGGGYGGGKIKG) is disordered. Position 36 is a lysine amide (Lys36).

Expressed in hemocytes (at protein level).

Its subcellular location is the secreted. Antimicrobial protein with activity against Gram-positive and Gram-negative bacteria, filamentous fungus, and yeast. Was tested against Micrococcus luteus A270 (MIC=0.5-1 uM), Echerichia coli SBS 363 (MIC=9-16 uM), Pseudomonas aeruginosa (MIC=0.01-0.3 uM), Aspergillus niger (MIC=3-6 uM), and Candida albicans MDM8 (MIC=1.5-3 uM). Has no hemolytic activity against human erythrocytes. The sequence is that of Serrulin from Tityus serrulatus (Brazilian scorpion).